The sequence spans 225 residues: Small ribosomal subunit protein uS3 (225 aa).

Residues 16-85 (VYEYLVKETE…TPQIEVKDVK (70 aa)) enclose the KH type-2 domain. Residues 200–225 (GENVGTESETDKADEQGREAANTEES) are disordered. A compositionally biased stretch (basic and acidic residues) spans 208-217 (ETDKADEQGR).

It belongs to the universal ribosomal protein uS3 family. As to quaternary structure, part of the 30S ribosomal subunit.

Functionally, binds the lower part of the 30S subunit head. The polypeptide is Small ribosomal subunit protein uS3 (Thermoplasma volcanium (strain ATCC 51530 / DSM 4299 / JCM 9571 / NBRC 15438 / GSS1)).